The primary structure comprises 245 residues: DNA polymerase sliding clamp (245 aa).

It belongs to the PCNA family. As to quaternary structure, homotrimer. The subunits circularize to form a toroid; DNA passes through its center. Replication factor C (RFC) is required to load the toroid on the DNA.

Functionally, sliding clamp subunit that acts as a moving platform for DNA processing. Responsible for tethering the catalytic subunit of DNA polymerase and other proteins to DNA during high-speed replication. This is DNA polymerase sliding clamp from Methanococcoides burtonii (strain DSM 6242 / NBRC 107633 / OCM 468 / ACE-M).